Reading from the N-terminus, the 49-residue chain is Large ribosomal subunit protein bL33B (49 aa).

It belongs to the bacterial ribosomal protein bL33 family.

The polypeptide is Large ribosomal subunit protein bL33B (rpmG2) (Listeria innocua serovar 6a (strain ATCC BAA-680 / CLIP 11262)).